The sequence spans 58 residues: Large ribosomal subunit protein bL32 (58 aa).

A disordered region spans residues 1–24 (MAVPKKKTSKSKRDKRKATWKRKA).

It belongs to the bacterial ribosomal protein bL32 family.

The protein is Large ribosomal subunit protein bL32 of Synechococcus sp. (strain ATCC 27144 / PCC 6301 / SAUG 1402/1) (Anacystis nidulans).